We begin with the raw amino-acid sequence, 293 residues long: Probable xyloglucan endotransglucosylase/hydrolase protein 7 (293 aa).

The first 29 residues, 1–29 (MVVSLFSSRNVFYTLSLCLFAALYQPVMS), serve as a signal peptide directing secretion. The region spanning 30–223 (RPAKFEDDFR…WSRAPFYAYY (194 aa)) is the GH16 domain. Catalysis depends on Glu109, which acts as the Nucleophile. Residue Glu113 is the Proton donor of the active site. Residue Glu113 participates in xyloglucan binding. An N-linked (GlcNAc...) asparagine glycan is attached at Asn117. Residues 126–128 (QTN), 136–138 (DRE), 202–203 (DW), and Gly207 contribute to the xyloglucan site. An N-linked (GlcNAc...) asparagine glycan is attached at Asn213. 2 disulfide bridges follow: Cys231/Cys239 and Cys276/Cys289. Arg281 is a binding site for xyloglucan.

It belongs to the glycosyl hydrolase 16 family. XTH group 1 subfamily. In terms of processing, contains at least one intrachain disulfide bond essential for its enzymatic activity.

It is found in the secreted. Its subcellular location is the cell wall. The protein localises to the extracellular space. The protein resides in the apoplast. The catalysed reaction is breaks a beta-(1-&gt;4) bond in the backbone of a xyloglucan and transfers the xyloglucanyl segment on to O-4 of the non-reducing terminal glucose residue of an acceptor, which can be a xyloglucan or an oligosaccharide of xyloglucan.. Catalyzes xyloglucan endohydrolysis (XEH) and/or endotransglycosylation (XET). Cleaves and religates xyloglucan polymers, an essential constituent of the primary cell wall, and thereby participates in cell wall construction of growing tissues. This chain is Probable xyloglucan endotransglucosylase/hydrolase protein 7 (XTH7), found in Arabidopsis thaliana (Mouse-ear cress).